Reading from the N-terminus, the 198-residue chain is Ribonuclease HII (198 aa).

The RNase H type-2 domain occupies 2 to 192; the sequence is MYYCGIDEAG…IKKIIDNQKN (191 aa). Residues Asp-8, Glu-9, and Asp-101 each coordinate a divalent metal cation.

It belongs to the RNase HII family. It depends on Mn(2+) as a cofactor. Mg(2+) serves as cofactor.

Its subcellular location is the cytoplasm. It catalyses the reaction Endonucleolytic cleavage to 5'-phosphomonoester.. In terms of biological role, endonuclease that specifically degrades the RNA of RNA-DNA hybrids. This chain is Ribonuclease HII, found in Natranaerobius thermophilus (strain ATCC BAA-1301 / DSM 18059 / JW/NM-WN-LF).